Here is a 443-residue protein sequence, read N- to C-terminus: Phosphoglucosamine mutase (443 aa).

The active-site Phosphoserine intermediate is S102. Mg(2+) contacts are provided by S102, D241, D243, and D245. Residue S102 is modified to Phosphoserine.

Belongs to the phosphohexose mutase family. Requires Mg(2+) as cofactor. Post-translationally, activated by phosphorylation.

It catalyses the reaction alpha-D-glucosamine 1-phosphate = D-glucosamine 6-phosphate. Its function is as follows. Catalyzes the conversion of glucosamine-6-phosphate to glucosamine-1-phosphate. The protein is Phosphoglucosamine mutase of Acinetobacter baylyi (strain ATCC 33305 / BD413 / ADP1).